Here is a 314-residue protein sequence, read N- to C-terminus: Olfactory receptor 5P72 (314 aa).

Residues 1–28 lie on the Extracellular side of the membrane; sequence MAFLEVGNHTAVTEFILLGLTDDPVLRV. Residue Asn-8 is glycosylated (N-linked (GlcNAc...) asparagine). A helical membrane pass occupies residues 29–49; sequence VLFTIILCIYLVTVMGNLSTI. Residues 50–57 lie on the Cytoplasmic side of the membrane; that stretch reads LLIRVSSQ. A helical membrane pass occupies residues 58 to 78; sequence LHHPMYFFLSHLASVDMGLSS. The Extracellular segment spans residues 79–102; that stretch reads SVTPNMLLNFLIERNTISYLGCGI. Cys-100 and Cys-192 are disulfide-bonded. The helical transmembrane segment at 103 to 123 threads the bilayer; sequence QQSLADFFGSVECFLLAAMAY. Over 124–136 the chain is Cytoplasmic; sequence DRFMAICNPLLYS. Residues 137 to 157 form a helical membrane-spanning segment; sequence TKMSTKVCVQLVVGSYIGGFL. Residues 158-199 are Extracellular-facing; sequence NASLIMFYFFSFLFCGPNRVDHFFCDFAPLVELSCSDVSVSV. Residues 200–220 form a helical membrane-spanning segment; it reads IVISFSAGSVTMITVFVIAVS. Over 221 to 240 the chain is Cytoplasmic; the sequence is YSYILITILKMHSIEGRHKA. The helical transmembrane segment at 241–261 threads the bilayer; it reads FSTCTSHLTAVTLYYGTITFI. The Extracellular portion of the chain corresponds to 262–274; the sequence is YVMPKSSFSTDQN. Residues 275-295 form a helical membrane-spanning segment; sequence KVVSVFYMVMIPMLNPLIYSL. The Cytoplasmic segment spans residues 296–314; that stretch reads RNNEIKGAIKRQLGKKMSC.

The protein belongs to the G-protein coupled receptor 1 family.

It localises to the cell membrane. In terms of biological role, potential odorant receptor. The polypeptide is Olfactory receptor 5P72 (Mus musculus (Mouse)).